The sequence spans 329 residues: DNA-directed RNA polymerase subunit alpha (329 aa).

The segment at 1–231 is alpha N-terminal domain (alpha-NTD); it reads MQTTLLKPKT…EQLAVFAQLE (231 aa). The tract at residues 249–329 is alpha C-terminal domain (alpha-CTD); that stretch reads FDPILLRPVD…SWPPAGLDKR (81 aa).

It belongs to the RNA polymerase alpha chain family. In terms of assembly, homodimer. The RNAP catalytic core consists of 2 alpha, 1 beta, 1 beta' and 1 omega subunit. When a sigma factor is associated with the core the holoenzyme is formed, which can initiate transcription.

The enzyme catalyses RNA(n) + a ribonucleoside 5'-triphosphate = RNA(n+1) + diphosphate. In terms of biological role, DNA-dependent RNA polymerase catalyzes the transcription of DNA into RNA using the four ribonucleoside triphosphates as substrates. The polypeptide is DNA-directed RNA polymerase subunit alpha (Variovorax paradoxus (strain S110)).